Reading from the N-terminus, the 44-residue chain is Mu-conotoxin-like Cal 12.1.2h (44 aa).

4 disulfides stabilise this stretch: Cys-3/Cys-16, Cys-11/Cys-28, Cys-18/Cys-33, and Cys-27/Cys-38. Trp-17 is subject to 6'-bromotryptophan. Pro-23 is modified (4-hydroxyproline). 2 positions are modified to 6'-bromotryptophan: Trp-36 and Trp-37. Residue Pro-39 is modified to 4-hydroxyproline. Trp-43 is modified (6'-bromotryptophan).

In terms of tissue distribution, expressed by the venom duct.

The protein resides in the secreted. Its function is as follows. Mu-conotoxins block voltage-gated sodium channels. This toxin reversibly blocks voltage-gated sodium channel in cephalopods, with no alteration in the voltage dependence of sodium conductance or on the kinetics of inactivation. This is Mu-conotoxin-like Cal 12.1.2h from Californiconus californicus (California cone).